Here is a 55-residue protein sequence, read N- to C-terminus: ATP synthase protein 8 (55 aa).

The chain crosses the membrane as a helical span at residues 6–26 (PHPWFAILVFSWIFFLVILPK).

Belongs to the ATPase protein 8 family. F-type ATPases have 2 components, CF(1) - the catalytic core - and CF(0) - the membrane proton channel.

It is found in the mitochondrion membrane. In terms of biological role, mitochondrial membrane ATP synthase (F(1)F(0) ATP synthase or Complex V) produces ATP from ADP in the presence of a proton gradient across the membrane which is generated by electron transport complexes of the respiratory chain. F-type ATPases consist of two structural domains, F(1) - containing the extramembraneous catalytic core and F(0) - containing the membrane proton channel, linked together by a central stalk and a peripheral stalk. During catalysis, ATP synthesis in the catalytic domain of F(1) is coupled via a rotary mechanism of the central stalk subunits to proton translocation. Part of the complex F(0) domain. Minor subunit located with subunit a in the membrane. In Squalus acanthias (Spiny dogfish), this protein is ATP synthase protein 8 (MT-ATP8).